A 275-amino-acid chain; its full sequence is Lectin (275 aa).

Residues 1–30 (MASLQTQMISFYLIFLSILLTTIFFFKVNS) form the signal peptide. D-glucose contacts are provided by aspartate 111 and glycine 129. Glutamate 149 and aspartate 151 together coordinate Mn(2+). Positions 151, 153, 155, and 159 each coordinate Ca(2+). Residues aspartate 159 and histidine 166 each contribute to the Mn(2+) site. Positions 211–217 (NSLEEEN) are excised as a propeptide. The D-glucose site is built by glycine 246 and alanine 247. Positions 270-275 (KQAADA) are excised as a propeptide.

Belongs to the leguminous lectin family. In terms of assembly, heterotetramer of two alpha and two beta chains. The mature form consists of two chains, alpha and beta, produced by cleavage of the immature protein. These remain cleaved, yet fold together to form one subunit.

Functionally, D-mannose specific lectin. The polypeptide is Lectin (Lens culinaris subsp. orientalis (Oriental wild lentil)).